The chain runs to 416 residues: 3-oxoacyl-[acyl-carrier-protein] synthase 1 (416 aa).

Residues 11–415 enclose the Ketosynthase family 3 (KS3) domain; that stretch reads FPSVVVTAVT…GHNVALAFGR (405 aa). Active-site for beta-ketoacyl synthase activity residues include cysteine 171, histidine 311, and histidine 345. Substrate contacts are provided by histidine 311 and histidine 345.

This sequence belongs to the thiolase-like superfamily. Beta-ketoacyl-ACP synthases family.

The protein resides in the cytoplasm. It carries out the reaction an ultra-long-chain mono-unsaturated fatty acyl-[ACP] + malonyl-[ACP] + H(+) = a 3-oxo-ultra-long-chain mono-unsaturated fatty acyl-[ACP] + holo-[ACP] + CO2. The protein operates within lipid metabolism; mycolic acid biosynthesis. In terms of biological role, part of the mycobacterial fatty acid elongation system FAS-II, which is involved in mycolic acid biosynthesis. Catalyzes the elongation of long chain acyl-ACP substrates by the addition of two carbons from malonyl-ACP to an acyl acceptor. Involved in the initial extension of the mycolate chain and forms monounsaturated fatty acids that averaged 40 carbons in length. The sequence is that of 3-oxoacyl-[acyl-carrier-protein] synthase 1 (kasA) from Mycobacterium tuberculosis (strain ATCC 35801 / TMC 107 / Erdman).